Here is a 287-residue protein sequence, read N- to C-terminus: Pyridoxal 5'-phosphate synthase subunit PdxS (287 aa).

Residue aspartate 21 participates in D-ribose 5-phosphate binding. Lysine 78 functions as the Schiff-base intermediate with D-ribose 5-phosphate in the catalytic mechanism. Glycine 150 serves as a coordination point for D-ribose 5-phosphate. Arginine 162 is a D-glyceraldehyde 3-phosphate binding site. D-ribose 5-phosphate contacts are provided by residues glycine 211 and 232–233; that span reads GS.

It belongs to the PdxS/SNZ family. As to quaternary structure, in the presence of PdxT, forms a dodecamer of heterodimers.

The catalysed reaction is aldehydo-D-ribose 5-phosphate + D-glyceraldehyde 3-phosphate + L-glutamine = pyridoxal 5'-phosphate + L-glutamate + phosphate + 3 H2O + H(+). The protein operates within cofactor biosynthesis; pyridoxal 5'-phosphate biosynthesis. Catalyzes the formation of pyridoxal 5'-phosphate from ribose 5-phosphate (RBP), glyceraldehyde 3-phosphate (G3P) and ammonia. The ammonia is provided by the PdxT subunit. Can also use ribulose 5-phosphate and dihydroxyacetone phosphate as substrates, resulting from enzyme-catalyzed isomerization of RBP and G3P, respectively. This Tropheryma whipplei (strain TW08/27) (Whipple's bacillus) protein is Pyridoxal 5'-phosphate synthase subunit PdxS.